The chain runs to 803 residues: PR domain zinc finger protein 4 (803 aa).

An SET domain is found at 408-532; the sequence is KQLVLRQSIV…PESELLFYYS (125 aa). 5 consecutive C2H2-type zinc fingers follow at residues 593 to 615, 621 to 643, 649 to 671, 677 to 699, and 705 to 727; these read WKCS…FMGH, HKCD…LKIH, YRCT…MVIH, LKCD…VLIH, and IKCP…LNSH. A C2H2-type 6; degenerate zinc finger spans residues 733–755; that stretch reads YVCEKCTKAYLTKYHLTRHLKTC. The segment at 757–803 is disordered; sequence EPSSSSSAQEEEDDESEEEDLADSMRTEDCRMGSAVYSTDESLSAHK. A compositionally biased stretch (acidic residues) spans 765–778; the sequence is QEEEDDESEEEDLA. Residues 792 to 803 are compositionally biased toward polar residues; that stretch reads VYSTDESLSAHK.

Belongs to the class V-like SAM-binding methyltransferase superfamily.

Its subcellular location is the nucleus. May function as a transcription factor involved in cell differentiation. The sequence is that of PR domain zinc finger protein 4 (Prdm4) from Mus musculus (Mouse).